The sequence spans 304 residues: Flagellin (304 aa).

It belongs to the bacterial flagellin family. Interacts with FliW in a 1:1 complex. Forms a 3-way complex of Hag, FliS and FliW, in which Flis and FliW do not directly interact.

It localises to the secreted. The protein localises to the bacterial flagellum. Its subcellular location is the cell wall. Its function is as follows. Flagellin is the subunit which polymerizes to form the filaments of bacterial flagella. Assembly into flagella requires FliW. Acts as a homeostatic autoinhibitory regulator to control its own cytoplasmic levels. Partner switching by flagellin between FliW and CsrA provides a flagellar assembly checkpoint to tightly control the timing of flagellin synthesis. Flagellin binds to assembly factor FliW, freeing translation regulator CsrA to repress translation of the flagellin mRNA. When the flagellar hook is assembled flagellin is secreted, depleting intracellular flagellin, which frees FliW to interact with CsrA. This derepresses flagellin translation and provides protein for flagellar assembly. Once the flagellar filament is completed cytoplasmic flagellin levels rise and CsrA translation repression of flagellin reinitiates. In Bacillus subtilis (strain 168), this protein is Flagellin.